Here is a 373-residue protein sequence, read N- to C-terminus: Anhydro-N-acetylmuramic acid kinase (373 aa).

Residue Gly12–Asp19 participates in ATP binding.

This sequence belongs to the anhydro-N-acetylmuramic acid kinase family.

It carries out the reaction 1,6-anhydro-N-acetyl-beta-muramate + ATP + H2O = N-acetyl-D-muramate 6-phosphate + ADP + H(+). It participates in amino-sugar metabolism; 1,6-anhydro-N-acetylmuramate degradation. It functions in the pathway cell wall biogenesis; peptidoglycan recycling. In terms of biological role, catalyzes the specific phosphorylation of 1,6-anhydro-N-acetylmuramic acid (anhMurNAc) with the simultaneous cleavage of the 1,6-anhydro ring, generating MurNAc-6-P. Is required for the utilization of anhMurNAc either imported from the medium or derived from its own cell wall murein, and thus plays a role in cell wall recycling. The polypeptide is Anhydro-N-acetylmuramic acid kinase (Salmonella paratyphi A (strain ATCC 9150 / SARB42)).